A 258-amino-acid polypeptide reads, in one-letter code: 5'-nucleotidase SurE (258 aa).

Positions 14, 15, 45, and 101 each coordinate a divalent metal cation.

The protein belongs to the SurE nucleotidase family. A divalent metal cation serves as cofactor.

It localises to the cytoplasm. It catalyses the reaction a ribonucleoside 5'-phosphate + H2O = a ribonucleoside + phosphate. Nucleotidase that shows phosphatase activity on nucleoside 5'-monophosphates. The sequence is that of 5'-nucleotidase SurE from Chlorobium phaeobacteroides (strain DSM 266 / SMG 266 / 2430).